A 738-amino-acid polypeptide reads, in one-letter code: MKGFKLSCTASNSNRSTPACSPILRKRSRSPTPQNQDGDTMVEKGSDHSSDKSPSTPEQGVQRSCSSQSGRSGGKNSKKSQSWYNVLSPTYKQRNEDFRKLFKQLPDTERLIVDYSCALQRDILLQGRLYLSENWICFYSNIFRWETLLTVRLKDICSMTKEKTARLIPNAIQVCTDSEKHFFTSFGARDRTYMMMFRLWQNALLEKPLCPKELWHFVHQCYGNELGLTSDDEDYVPPDDDFNTMGYCEEIPIEENEVNDSSSKSSIETKPDASPQLPKKSITNSTLTSTGSSEAPVSFDGLPLEEEVMEGDGSLEKELAIDNIIGEKIEIMAPVTSPSLDFNDNEDIPTELSDSSDTHDEGEVQAFYEDLSGRQYVNEVFNFSVDKLYDLLFTNSPFLRDFMEQRRFSDIIFHPWKKEENGNQSRVILYTITLTNPLAPKTATVRETQTMYKASQESECYVIDAEVLTHDVPYHDYFYTINRYTLTRVARNKSRLRVSTELRYRKQPWGFVKTFIEKNFWSGLEDYFRHLETELTKTESTYLAEIHRQSPKEKASKSSAVRRRKRPHAHLRVPHLEEVMSPVTTPTDEDVGHRIKHVAGSTQTRHIPEDTPDGFHLQSVSKLLLVISCVICFSLVLLVVLNMMLFYKLWMLEYTTQTLTAWQGLRLQERLPQSQTEWAQLLESQQKYHDTELQKWREIIKSSVLLLDQMKDSLINLQNGIRSRDYTAESDEKRNRYH.

Residues 1–81 (MKGFKLSCTA…SGGKNSKKSQ (81 aa)) are disordered. Polar residues predominate over residues 8-19 (CTASNSNRSTPA). Phosphoserine occurs at positions 28 and 30. Over residues 41–51 (MVEKGSDHSSD) the composition is skewed to basic and acidic residues. The span at 59-70 (QGVQRSCSSQSG) shows a compositional bias: low complexity. One can recognise a GRAM domain in the interval 96–163 (EDFRKLFKQL…KDICSMTKEK (68 aa)). The segment at 254–299 (EENEVNDSSSKSSIETKPDASPQLPKKSITNSTLTSTGSSEAPVSF) is disordered. Residues 259-268 (NDSSSKSSIE) show a composition bias toward polar residues. The residue at position 274 (Ser274) is a Phosphoserine. Positions 281 to 295 (SITNSTLTSTGSSEA) are enriched in polar residues. The region spanning 372–543 (SGRQYVNEVF…ELTKTESTYL (172 aa)) is the VASt domain. Tyr389 carries the phosphotyrosine modification. Residues Ser550 and Ser581 each carry the phosphoserine modification. Phosphothreonine occurs at positions 584, 585, and 587. Residues 623 to 643 (LLLVISCVICFSLVLLVVLNM) form a helical membrane-spanning segment.

Highly expressed in the adrenal gland (at protein level) and brain. Also found in the kidney, testis and macrophages.

Its subcellular location is the endoplasmic reticulum membrane. It is found in the cell membrane. Its function is as follows. Cholesterol transporter that mediates non-vesicular transport of cholesterol from the plasma membrane (PM) to the endoplasmic reticulum (ER). Contains unique domains for binding cholesterol and the PM, thereby serving as a molecular bridge for the transfer of cholesterol from the PM to the ER. Plays a crucial role in cholesterol homeostasis in the adrenal gland and has the unique ability to localize to the PM based on the level of membrane cholesterol. In lipid-poor conditions localizes to the ER membrane and in response to excess cholesterol in the PM is recruited to the endoplasmic reticulum-plasma membrane contact sites (EPCS) which is mediated by the GRAM domain. At the EPCS, the sterol-binding VASt/ASTER domain binds to the cholesterol in the PM and facilitates its transfer from the PM to ER. This Mus musculus (Mouse) protein is Protein Aster-B (Gramd1b).